A 323-amino-acid chain; its full sequence is Beta-ketoacyl-[acyl-carrier-protein] synthase III (323 aa).

Residues cysteine 113 and histidine 250 contribute to the active site. Positions 251-255 (QANKR) are ACP-binding. Asparagine 280 is a catalytic residue.

The protein belongs to the thiolase-like superfamily. FabH family. In terms of assembly, homodimer.

Its subcellular location is the cytoplasm. The enzyme catalyses malonyl-[ACP] + acetyl-CoA + H(+) = 3-oxobutanoyl-[ACP] + CO2 + CoA. Its pathway is lipid metabolism; fatty acid biosynthesis. Catalyzes the condensation reaction of fatty acid synthesis by the addition to an acyl acceptor of two carbons from malonyl-ACP. Catalyzes the first condensation reaction which initiates fatty acid synthesis and may therefore play a role in governing the total rate of fatty acid production. Possesses both acetoacetyl-ACP synthase and acetyl transacylase activities. Its substrate specificity determines the biosynthesis of branched-chain and/or straight-chain of fatty acids. The protein is Beta-ketoacyl-[acyl-carrier-protein] synthase III of Brucella suis (strain ATCC 23445 / NCTC 10510).